Here is a 255-residue protein sequence, read N- to C-terminus: 5'-nucleotidase SurE (255 aa).

A divalent metal cation is bound by residues Asp-8, Asp-9, Ser-39, and Asn-91.

This sequence belongs to the SurE nucleotidase family. A divalent metal cation serves as cofactor.

It is found in the cytoplasm. The catalysed reaction is a ribonucleoside 5'-phosphate + H2O = a ribonucleoside + phosphate. Functionally, nucleotidase that shows phosphatase activity on nucleoside 5'-monophosphates. In Acinetobacter baumannii (strain ATCC 17978 / DSM 105126 / CIP 53.77 / LMG 1025 / NCDC KC755 / 5377), this protein is 5'-nucleotidase SurE.